A 250-amino-acid polypeptide reads, in one-letter code: UDP-2,3-diacylglucosamine hydrolase (250 aa).

Asp-8, His-10, Asp-41, Asn-79, and His-114 together coordinate Mn(2+). Substrate is bound at residue 79–80 (NR). Residues Asp-122, Ser-160, Asp-172, Gln-175, and His-203 each contribute to the substrate site. Positions 203 and 205 each coordinate Mn(2+).

Belongs to the LpxH family. Mn(2+) is required as a cofactor.

Its subcellular location is the cell inner membrane. The catalysed reaction is UDP-2-N,3-O-bis[(3R)-3-hydroxytetradecanoyl]-alpha-D-glucosamine + H2O = 2-N,3-O-bis[(3R)-3-hydroxytetradecanoyl]-alpha-D-glucosaminyl 1-phosphate + UMP + 2 H(+). The protein operates within glycolipid biosynthesis; lipid IV(A) biosynthesis; lipid IV(A) from (3R)-3-hydroxytetradecanoyl-[acyl-carrier-protein] and UDP-N-acetyl-alpha-D-glucosamine: step 4/6. Its function is as follows. Hydrolyzes the pyrophosphate bond of UDP-2,3-diacylglucosamine to yield 2,3-diacylglucosamine 1-phosphate (lipid X) and UMP by catalyzing the attack of water at the alpha-P atom. Involved in the biosynthesis of lipid A, a phosphorylated glycolipid that anchors the lipopolysaccharide to the outer membrane of the cell. This Xylella fastidiosa (strain M12) protein is UDP-2,3-diacylglucosamine hydrolase.